A 729-amino-acid polypeptide reads, in one-letter code: Dipeptidyl peptidase 3 (729 aa).

H459 provides a ligand contact to Zn(2+). The active site involves E460. Residues H464 and E517 each contribute to the Zn(2+) site.

Belongs to the peptidase M49 family. Requires Zn(2+) as cofactor.

Its subcellular location is the cytoplasm. The enzyme catalyses Release of an N-terminal dipeptide from a peptide comprising four or more residues, with broad specificity. Also acts on dipeptidyl 2-naphthylamides.. This Nematostella vectensis (Starlet sea anemone) protein is Dipeptidyl peptidase 3 (dpp3).